The sequence spans 111 residues: Phosphoribosyl-ATP pyrophosphatase (111 aa).

The protein belongs to the PRA-PH family.

It localises to the cytoplasm. It carries out the reaction 1-(5-phospho-beta-D-ribosyl)-ATP + H2O = 1-(5-phospho-beta-D-ribosyl)-5'-AMP + diphosphate + H(+). Its pathway is amino-acid biosynthesis; L-histidine biosynthesis; L-histidine from 5-phospho-alpha-D-ribose 1-diphosphate: step 2/9. This chain is Phosphoribosyl-ATP pyrophosphatase, found in Ectopseudomonas mendocina (strain ymp) (Pseudomonas mendocina).